The primary structure comprises 259 residues: Imidazole glycerol phosphate synthase subunit HisF (259 aa).

Catalysis depends on residues Asp11 and Asp130.

Belongs to the HisA/HisF family. As to quaternary structure, heterodimer of HisH and HisF.

Its subcellular location is the cytoplasm. The enzyme catalyses 5-[(5-phospho-1-deoxy-D-ribulos-1-ylimino)methylamino]-1-(5-phospho-beta-D-ribosyl)imidazole-4-carboxamide + L-glutamine = D-erythro-1-(imidazol-4-yl)glycerol 3-phosphate + 5-amino-1-(5-phospho-beta-D-ribosyl)imidazole-4-carboxamide + L-glutamate + H(+). The protein operates within amino-acid biosynthesis; L-histidine biosynthesis; L-histidine from 5-phospho-alpha-D-ribose 1-diphosphate: step 5/9. IGPS catalyzes the conversion of PRFAR and glutamine to IGP, AICAR and glutamate. The HisF subunit catalyzes the cyclization activity that produces IGP and AICAR from PRFAR using the ammonia provided by the HisH subunit. This Chloroflexus aurantiacus (strain ATCC 29366 / DSM 635 / J-10-fl) protein is Imidazole glycerol phosphate synthase subunit HisF.